The chain runs to 431 residues: Homogentisate 1,2-dioxygenase (431 aa).

The Proton acceptor role is filled by histidine 286. Positions 329 and 335 each coordinate Fe cation. Residues tyrosine 344 and histidine 365 each coordinate homogentisate. Histidine 365 contacts Fe cation.

The protein belongs to the homogentisate dioxygenase family. Hexamer; dimer of trimers. The cofactor is Fe cation.

The enzyme catalyses homogentisate + O2 = 4-maleylacetoacetate + H(+). It functions in the pathway amino-acid degradation; L-phenylalanine degradation; acetoacetate and fumarate from L-phenylalanine: step 4/6. Functionally, involved in the catabolism of homogentisate (2,5-dihydroxyphenylacetate or 2,5-OH-PhAc), a central intermediate in the degradation of phenylalanine and tyrosine. Catalyzes the oxidative ring cleavage of the aromatic ring of homogentisate to yield maleylacetoacetate. This Pseudomonas fluorescens (strain Pf0-1) protein is Homogentisate 1,2-dioxygenase.